Reading from the N-terminus, the 681-residue chain is Transferrin (681 aa).

Positions 1–18 (MALKLLTLIALTCAAANA) are cleaved as a signal peptide. Transferrin-like domains lie at 23-364 (YKLC…ERGH) and 371-676 (VRLC…DVIS). 2 disulfides stabilise this stretch: cysteine 26–cysteine 60 and cysteine 35–cysteine 51. 2 residues coordinate Fe(3+): aspartate 75 and tyrosine 108. Disulfide bonds link cysteine 132–cysteine 228, cysteine 181–cysteine 207, cysteine 204–cysteine 213, and cysteine 271–cysteine 284. The hydrogencarbonate site is built by threonine 134, arginine 138, valine 140, and glycine 141. An N-linked (GlcNAc...) asparagine glycan is attached at asparagine 218. Fe(3+) is bound at residue tyrosine 222. N-linked (GlcNAc...) asparagine glycosylation occurs at asparagine 355. 2 cysteine pairs are disulfide-bonded: cysteine 374–cysteine 411 and cysteine 384–cysteine 402. Asparagine 418 carries an N-linked (GlcNAc...) asparagine glycan. 3 disulfide bridges follow: cysteine 478–cysteine 551, cysteine 506–cysteine 678, and cysteine 579–cysteine 596.

Belongs to the transferrin family.

The protein localises to the secreted. Transferrins are iron binding transport proteins which bind Fe(3+) ion in association with the binding of an anion, usually bicarbonate. This transferrin binds only one Fe(3+) ion per protein molecule. The polypeptide is Transferrin (Manduca sexta (Tobacco hawkmoth)).